The sequence spans 397 residues: Elongation factor Tu (397 aa).

The 197-residue stretch at 10–206 folds into the tr-type G domain; it reads KPHVNIGTIG…EVDAYIPTPE (197 aa). Residues 19 to 26 are G1; sequence GHVDHGKT. 19-26 is a GTP binding site; it reads GHVDHGKT. Threonine 26 is a Mg(2+) binding site. The tract at residues 60–64 is G2; that stretch reads GITIN. The G3 stretch occupies residues 81–84; that stretch reads DCPG. Residues 81 to 85 and 136 to 139 each bind GTP; these read DCPGH and NKAD. The tract at residues 136–139 is G4; sequence NKAD. Residues 174 to 176 form a G5 region; the sequence is SAL.

The protein belongs to the TRAFAC class translation factor GTPase superfamily. Classic translation factor GTPase family. EF-Tu/EF-1A subfamily. In terms of assembly, monomer.

The protein resides in the cytoplasm. The catalysed reaction is GTP + H2O = GDP + phosphate + H(+). In terms of biological role, GTP hydrolase that promotes the GTP-dependent binding of aminoacyl-tRNA to the A-site of ribosomes during protein biosynthesis. This chain is Elongation factor Tu, found in Clostridium acetobutylicum (strain ATCC 824 / DSM 792 / JCM 1419 / IAM 19013 / LMG 5710 / NBRC 13948 / NRRL B-527 / VKM B-1787 / 2291 / W).